A 224-amino-acid polypeptide reads, in one-letter code: PKHD-type hydroxylase Sbal_3634 (224 aa).

The Fe2OG dioxygenase domain occupies 78–176 (QFYPPLFNRY…RTAAFMWLQS (99 aa)). Residues His96, Asp98, and His157 each contribute to the Fe cation site. Arg167 lines the 2-oxoglutarate pocket.

Requires Fe(2+) as cofactor. L-ascorbate serves as cofactor.

The protein is PKHD-type hydroxylase Sbal_3634 of Shewanella baltica (strain OS155 / ATCC BAA-1091).